The sequence spans 49 residues: IgW transmembrane form Tm2T7/Tm7T7/Tm3T3 (49 aa).

Asparagine 3 is a glycosylation site (N-linked (GlcNAc...) asparagine). Residues 25-45 (VAAFAILFILSFLYSTFVTVV) traverse the membrane as a helical segment.

Expressed in the spleen. May also be expressed in other lymphoid tissues.

It localises to the membrane. This Heterodontus francisci (Horn shark) protein is IgW transmembrane form Tm2T7/Tm7T7/Tm3T3.